The chain runs to 190 residues: Cytoglobin (190 aa).

The segment at 1-21 (MEKVPGDMEIERRERSEELSE) is disordered. The Globin domain occupies 18–167 (ELSEAERKAV…IYSHVTAAYK (150 aa)). Residues C38 and C83 are joined by a disulfide bond. The heme b site is built by H81 and H113.

It belongs to the globin family. As to quaternary structure, monomeric. Homodimer; disulfide-linked in vitro. Also homooligomeric in vitro. The formation of an intramolecular disulfide bond between cysteines Cys-38 and Cys-83 specifically enhances the nitrite reductase activity. In terms of tissue distribution, expressed in brain and retina by non-neuronal cells (at protein level). This is the major globin expressed in vascular smooth muscle and is not present in the endothelium (at protein level).

The protein localises to the cytoplasm. Its subcellular location is the nucleus. It carries out the reaction Fe(II)-heme b-[protein] + nitric oxide + O2 = Fe(III)-heme b-[protein] + nitrate. The enzyme catalyses 2 superoxide + 2 H(+) = H2O2 + O2. The catalysed reaction is Fe(III)-heme b-[protein] + nitric oxide + H2O = Fe(II)-heme b-[protein] + nitrite + 2 H(+). It catalyses the reaction H2O2 + AH2 = A + 2 H2O. The nitric oxide dioxygenase activity is activated by a reducing system composed of cytochrome b5, its upstream reductase CYB5R3 and NADH. In terms of biological role, probable multifunctional globin with a hexacoordinated heme iron required for the catalysis of various reactions depending on redox condition of the cell as well as oxygen availability. Has a nitric oxide dioxygenase (NOD) activity and is most probably involved in cell-mediated and oxygen-dependent nitric oxide consumption. By scavenging this second messenger may regulate several biological processes including endothelium-mediated vasodilation and vascular tone. Under normoxic conditions functions as a nitric oxide dioxygenase (NOD) but under hypoxic conditions the globin may switch its function to that of a nitrite (NO2) reductase (NiR), generating nitric oxide. Could also have peroxidase and superoxide dismutase activities, detoxifying reactive oxygen species and protecting cells against oxidative stress. Also binds dioxygen with low affinity and could function as an oxygen sensor but has probably no function as a respiratory oxygen carrier. This is Cytoglobin from Mus musculus (Mouse).